A 353-amino-acid chain; its full sequence is Methionine import ATP-binding protein MetN (353 aa).

One can recognise an ABC transporter domain in the interval 7–249; sequence LENIDVTFKQ…PKEELSRQFV (243 aa). 41–48 provides a ligand contact to ATP; that stretch reads GYSGAGKS.

Belongs to the ABC transporter superfamily. Methionine importer (TC 3.A.1.24) family. The complex is composed of two ATP-binding proteins (MetN), two transmembrane proteins (MetI) and a solute-binding protein (MetQ).

The protein resides in the cell membrane. The catalysed reaction is L-methionine(out) + ATP + H2O = L-methionine(in) + ADP + phosphate + H(+). The enzyme catalyses D-methionine(out) + ATP + H2O = D-methionine(in) + ADP + phosphate + H(+). In terms of biological role, part of the ABC transporter complex MetNIQ involved in methionine import. Responsible for energy coupling to the transport system. The chain is Methionine import ATP-binding protein MetN from Ligilactobacillus salivarius (strain UCC118) (Lactobacillus salivarius).